We begin with the raw amino-acid sequence, 142 residues long: Large ribosomal subunit protein uL13 (142 aa).

This sequence belongs to the universal ribosomal protein uL13 family. As to quaternary structure, part of the 50S ribosomal subunit.

Functionally, this protein is one of the early assembly proteins of the 50S ribosomal subunit, although it is not seen to bind rRNA by itself. It is important during the early stages of 50S assembly. This chain is Large ribosomal subunit protein uL13, found in Paraburkholderia phytofirmans (strain DSM 17436 / LMG 22146 / PsJN) (Burkholderia phytofirmans).